The chain runs to 412 residues: Translation initiation factor 2 subunit gamma (412 aa).

In terms of domain architecture, tr-type G spans 7 to 203 (QPEVNIGLVG…AIESEIPTPD (197 aa)). The tract at residues 16–23 (GHVDHGKT) is G1. Mg(2+) contacts are provided by Asp-19, Thr-23, Gly-44, and Ser-46. 19-24 (DHGKTT) contributes to the GTP binding site. Positions 44–48 (GISIR) are G2. Residues 90–93 (DAPG) form a G3 region. Residues 146-149 (NKVD) and 181-183 (SAQ) each bind GTP. The segment at 146–149 (NKVD) is G4. A G5 region spans residues 181 to 183 (SAQ).

It belongs to the TRAFAC class translation factor GTPase superfamily. Classic translation factor GTPase family. EIF2G subfamily. As to quaternary structure, heterotrimer composed of an alpha, a beta and a gamma chain. Mg(2+) serves as cofactor.

The enzyme catalyses GTP + H2O = GDP + phosphate + H(+). Functionally, eIF-2 functions in the early steps of protein synthesis by forming a ternary complex with GTP and initiator tRNA. The polypeptide is Translation initiation factor 2 subunit gamma (Halorubrum lacusprofundi (strain ATCC 49239 / DSM 5036 / JCM 8891 / ACAM 34)).